Reading from the N-terminus, the 271-residue chain is Formamidopyrimidine-DNA glycosylase (271 aa).

Pro-2 serves as the catalytic Schiff-base intermediate with DNA. Glu-3 serves as the catalytic Proton donor. Lys-57 functions as the Proton donor; for beta-elimination activity in the catalytic mechanism. The DNA site is built by His-90, Arg-109, and Lys-150. An FPG-type zinc finger spans residues 235 to 269 (LVYGNKDKPCPKCGGKIESLIIGQRNSFFCPKCQK). Arg-259 (proton donor; for delta-elimination activity) is an active-site residue.

The protein belongs to the FPG family. As to quaternary structure, monomer. The cofactor is Zn(2+).

It catalyses the reaction Hydrolysis of DNA containing ring-opened 7-methylguanine residues, releasing 2,6-diamino-4-hydroxy-5-(N-methyl)formamidopyrimidine.. It carries out the reaction 2'-deoxyribonucleotide-(2'-deoxyribose 5'-phosphate)-2'-deoxyribonucleotide-DNA = a 3'-end 2'-deoxyribonucleotide-(2,3-dehydro-2,3-deoxyribose 5'-phosphate)-DNA + a 5'-end 5'-phospho-2'-deoxyribonucleoside-DNA + H(+). In terms of biological role, involved in base excision repair of DNA damaged by oxidation or by mutagenic agents. Acts as a DNA glycosylase that recognizes and removes damaged bases. Has a preference for oxidized purines, such as 7,8-dihydro-8-oxoguanine (8-oxoG). Has AP (apurinic/apyrimidinic) lyase activity and introduces nicks in the DNA strand. Cleaves the DNA backbone by beta-delta elimination to generate a single-strand break at the site of the removed base with both 3'- and 5'-phosphates. The sequence is that of Formamidopyrimidine-DNA glycosylase from Haemophilus influenzae (strain PittEE).